The primary structure comprises 304 residues: Quinolinate synthase (304 aa).

Iminosuccinate is bound by residues His-24 and Ser-41. Cys-86 provides a ligand contact to [4Fe-4S] cluster. Residues 112-114 (YVN) and Ser-129 each bind iminosuccinate. Residue Cys-171 coordinates [4Fe-4S] cluster. Iminosuccinate contacts are provided by residues 197–199 (HPE) and Thr-214. Cys-259 is a [4Fe-4S] cluster binding site.

It belongs to the quinolinate synthase family. Type 2 subfamily. Requires [4Fe-4S] cluster as cofactor.

It is found in the cytoplasm. The catalysed reaction is iminosuccinate + dihydroxyacetone phosphate = quinolinate + phosphate + 2 H2O + H(+). The protein operates within cofactor biosynthesis; NAD(+) biosynthesis; quinolinate from iminoaspartate: step 1/1. Functionally, catalyzes the condensation of iminoaspartate with dihydroxyacetone phosphate to form quinolinate. This Geobacter sp. (strain M21) protein is Quinolinate synthase.